Consider the following 1437-residue polypeptide: uncharacterized protein (1437 aa).

An N-terminal signal peptide occupies residues methionine 1 to asparagine 25. Residues glutamine 26–tryptophan 1326 are Extracellular-facing. N-linked (GlcNAc...) asparagine glycosylation is found at asparagine 103, asparagine 315, asparagine 364, asparagine 492, asparagine 605, asparagine 676, and asparagine 914. In terms of domain architecture, NIDO spans alanine 193–valine 356. An AMOP domain is found at valine 648 to arginine 829. Residues leucine 1327–phenylalanine 1347 traverse the membrane as a helical segment. Residues tryptophan 1348–valine 1437 lie on the Cytoplasmic side of the membrane. Residues proline 1394–proline 1419 form a disordered region.

It is found in the membrane. This is an uncharacterized protein from Caenorhabditis elegans.